A 231-amino-acid chain; its full sequence is Ion-translocating oxidoreductase complex subunit E (231 aa).

A run of 6 helical transmembrane segments spans residues 18–38, 39–59, 63–83, 86–106, 125–145, and 182–202; these read ALVQ…ATNA, LGLG…ISTL, TPAE…VSAV, LINA…PLIV, ALSA…MFVL, and PFLL…MLAG.

This sequence belongs to the NqrDE/RnfAE family. The complex is composed of six subunits: RsxA, RsxB, RsxC, RsxD, RsxE and RsxG.

The protein localises to the cell inner membrane. Functionally, part of a membrane-bound complex that couples electron transfer with translocation of ions across the membrane. Required to maintain the reduced state of SoxR. The polypeptide is Ion-translocating oxidoreductase complex subunit E (Escherichia coli O7:K1 (strain IAI39 / ExPEC)).